The sequence spans 550 residues: Proteasome-associated ATPase (550 aa).

The stretch at E9 to Q48 forms a coiled coil. G233 to L238 contributes to the ATP binding site. Positions K528–L550 are disordered. The tract at residues Y549–L550 is docks into pockets in the proteasome alpha-ring.

This sequence belongs to the AAA ATPase family. In terms of assembly, homohexamer. Assembles into a hexameric ring structure that caps the 20S proteasome core. Strongly interacts with the prokaryotic ubiquitin-like protein Pup through a hydrophobic interface; the interacting region of ARC lies in its N-terminal coiled-coil domain. There is one Pup binding site per ARC hexamer ring. Upon ATP-binding, the C-terminus of ARC interacts with the alpha-rings of the proteasome core, possibly by binding to the intersubunit pockets.

It functions in the pathway protein degradation; proteasomal Pup-dependent pathway. In terms of biological role, ATPase which is responsible for recognizing, binding, unfolding and translocation of pupylated proteins into the bacterial 20S proteasome core particle. May be essential for opening the gate of the 20S proteasome via an interaction with its C-terminus, thereby allowing substrate entry and access to the site of proteolysis. Thus, the C-termini of the proteasomal ATPase may function like a 'key in a lock' to induce gate opening and therefore regulate proteolysis. The polypeptide is Proteasome-associated ATPase (Jonesia denitrificans (strain ATCC 14870 / DSM 20603 / BCRC 15368 / CIP 55.134 / JCM 11481 / NBRC 15587 / NCTC 10816 / Prevot 55134) (Listeria denitrificans)).